The primary structure comprises 638 residues: Signal recognition particle receptor subunit alpha (638 aa).

Disordered stretches follow at residues 129–205 (KIRA…VELS), 218–245 (IQKH…KKAP), and 262–315 (SAPT…ATKG). 2 stretches are compositionally biased toward basic and acidic residues: residues 137–146 (KKFEDSEKAK) and 153–165 (IETR…EKAK). At serine 177 the chain carries Phosphoserine. Over residues 218–239 (IQKHGRGLEKSSKSTKSDAPKE) the composition is skewed to basic and acidic residues. A Phosphothreonine modification is found at threonine 284. Residues serine 296, serine 297, and serine 298 each carry the phosphoserine modification. Positions 304–314 (AQNASKPSATK) are enriched in polar residues. Residues 419–636 (YVVTFCGVNG…NAKAVVAALM (218 aa)) form an NG domain region. 425-432 (GVNGVGKS) lines the GTP pocket. Serine 473 is subject to Phosphoserine. 520-524 (DTAGR) serves as a coordination point for GTP. The residue at position 578 (threonine 578) is a Phosphothreonine. A GTP-binding site is contributed by 588–591 (TKFD).

This sequence belongs to the GTP-binding SRP family. Heterodimer with SRPRB. Interacts with the signal recognition particle (SRP) complex subunit SRP54.

The protein resides in the endoplasmic reticulum membrane. Component of the SRP (signal recognition particle) receptor. Ensures, in conjunction with the signal recognition particle, the correct targeting of the nascent secretory proteins to the endoplasmic reticulum membrane system. Forms a guanosine 5'-triphosphate (GTP)-dependent complex with the SRP subunit SRP54. SRP receptor compaction and GTPase rearrangement drive SRP-mediated cotranslational protein translocation into the ER. This Canis lupus familiaris (Dog) protein is Signal recognition particle receptor subunit alpha.